The chain runs to 106 residues: uncharacterized protein (106 aa).

This is an uncharacterized protein from Schizosaccharomyces pombe (strain 972 / ATCC 24843) (Fission yeast).